Consider the following 166-residue polypeptide: NADH-quinone oxidoreductase subunit B (166 aa).

[4Fe-4S] cluster is bound by residues C44, C45, C110, and C140.

This sequence belongs to the complex I 20 kDa subunit family. NDH-1 is composed of 14 different subunits. Subunits NuoB, C, D, E, F, and G constitute the peripheral sector of the complex. [4Fe-4S] cluster is required as a cofactor.

It localises to the cell membrane. The enzyme catalyses a quinone + NADH + 5 H(+)(in) = a quinol + NAD(+) + 4 H(+)(out). NDH-1 shuttles electrons from NADH, via FMN and iron-sulfur (Fe-S) centers, to quinones in the respiratory chain. The immediate electron acceptor for the enzyme in this species is believed to be a menaquinone. Couples the redox reaction to proton translocation (for every two electrons transferred, four hydrogen ions are translocated across the cytoplasmic membrane), and thus conserves the redox energy in a proton gradient. The sequence is that of NADH-quinone oxidoreductase subunit B from Carboxydothermus hydrogenoformans (strain ATCC BAA-161 / DSM 6008 / Z-2901).